A 160-amino-acid chain; its full sequence is Variant surface antigen C (160 aa).

The N-terminal stretch at 1–29 (MKKSIFSKKLLVSFGSLVALASIPLIAIS) is a signal peptide. A lipid anchor (N-palmitoyl cysteine) is attached at C30. Residue C30 is the site of S-diacylglycerol cysteine attachment. The tract at residues 32–160 (QTNTDKSQQP…SSESGSQKTT (129 aa)) is disordered. Low complexity-rich tracts occupy residues 38–54 (SQQP…QSGT) and 62–87 (SGTS…QTET). 6 tandem repeats follow at residues 86 to 97 (ETAPKSPESGSQ), 98 to 109 (EATPKSPESGSQ), 110 to 121 (EATPKSPESGSQ), 122 to 133 (EAAPKSSESGSQ), 134 to 145 (EAAPKSSESGSQ), and 146 to 157 (EAAPKSSESGSQ). The segment at 86–157 (ETAPKSPESG…APKSSESGSQ (72 aa)) is 6 X 12 AA tandem repeats. A compositionally biased stretch (polar residues) spans 93 to 160 (ESGSQEATPK…SSESGSQKTT (68 aa)).

The protein resides in the cell membrane. Its function is as follows. Responsible for the antigenic diversity for host adaptation. The polypeptide is Variant surface antigen C (vlpC) (Mesomycoplasma hyorhinis (Mycoplasma hyorhinis)).